A 125-amino-acid polypeptide reads, in one-letter code: uncharacterized protein (125 aa).

The region spanning 1 to 63 (MSQSIEDYLE…YEPYIGITLT (63 aa)) is the HTH dtxR-type domain.

This sequence belongs to the DtxR/MntR family.

This is an uncharacterized protein from Methanocaldococcus jannaschii (strain ATCC 43067 / DSM 2661 / JAL-1 / JCM 10045 / NBRC 100440) (Methanococcus jannaschii).